A 264-amino-acid chain; its full sequence is Phosphatidylglycerol--prolipoprotein diacylglyceryl transferase (264 aa).

7 helical membrane passes run 14 to 34 (IIFSIGPIALRWYGLMYLIGF), 60 to 80 (LIYTCFWGVILGGRIGDVFFY), 98 to 118 (GGMSFHGGLIGVIVAMIWVSF), 128 to 148 (ADFIAPLIPFGLGMGRIGNFI), 176 to 196 (SQLYEFFLEGVVLFFILNWFI), 203 to 223 (GSVAGLFLIGYGVFRFLVEYV), and 240 to 260 (GQLLSLPMIIGGLAIMIWAYS). Arg-143 serves as a coordination point for a 1,2-diacyl-sn-glycero-3-phospho-(1'-sn-glycerol).

Belongs to the Lgt family.

The protein resides in the cell inner membrane. It catalyses the reaction L-cysteinyl-[prolipoprotein] + a 1,2-diacyl-sn-glycero-3-phospho-(1'-sn-glycerol) = an S-1,2-diacyl-sn-glyceryl-L-cysteinyl-[prolipoprotein] + sn-glycerol 1-phosphate + H(+). Its pathway is protein modification; lipoprotein biosynthesis (diacylglyceryl transfer). Catalyzes the transfer of the diacylglyceryl group from phosphatidylglycerol to the sulfhydryl group of the N-terminal cysteine of a prolipoprotein, the first step in the formation of mature lipoproteins. This Actinobacillus pleuropneumoniae serotype 7 (strain AP76) protein is Phosphatidylglycerol--prolipoprotein diacylglyceryl transferase.